Consider the following 750-residue polypeptide: Photosystem I P700 chlorophyll a apoprotein A1 (750 aa).

Transmembrane regions (helical) follow at residues 70–93 (VFSA…FHGA), 156–179 (LYCT…FHYH), 195–219 (LNHH…HVSL), 291–309 (IAHH…GHMY), 346–369 (WHAQ…HHMY), 385–411 (LSLF…IFMV), 433–455 (AIIS…LYIH), and 531–549 (FLVH…LILL). [4Fe-4S] cluster contacts are provided by Cys-573 and Cys-582. A run of 2 helical transmembrane segments spans residues 589–610 (HVFL…HFSW) and 664–686 (LSAY…MFLF). His-675 provides a ligand contact to chlorophyll a'. The chlorophyll a site is built by Met-683 and Tyr-691. Phylloquinone is bound at residue Trp-692. The chain crosses the membrane as a helical span at residues 724–744 (AVGVTHYLLGGIATTWAFFLA).

It belongs to the PsaA/PsaB family. As to quaternary structure, the PsaA/B heterodimer binds the P700 chlorophyll special pair and subsequent electron acceptors. PSI consists of a core antenna complex that captures photons, and an electron transfer chain that converts photonic excitation into a charge separation. The eukaryotic PSI reaction center is composed of at least 11 subunits. The cofactor is P700 is a chlorophyll a/chlorophyll a' dimer, A0 is one or more chlorophyll a, A1 is one or both phylloquinones and FX is a shared 4Fe-4S iron-sulfur center..

It localises to the plastid. It is found in the chloroplast thylakoid membrane. It carries out the reaction reduced [plastocyanin] + hnu + oxidized [2Fe-2S]-[ferredoxin] = oxidized [plastocyanin] + reduced [2Fe-2S]-[ferredoxin]. Functionally, psaA and PsaB bind P700, the primary electron donor of photosystem I (PSI), as well as the electron acceptors A0, A1 and FX. PSI is a plastocyanin-ferredoxin oxidoreductase, converting photonic excitation into a charge separation, which transfers an electron from the donor P700 chlorophyll pair to the spectroscopically characterized acceptors A0, A1, FX, FA and FB in turn. Oxidized P700 is reduced on the lumenal side of the thylakoid membrane by plastocyanin. This chain is Photosystem I P700 chlorophyll a apoprotein A1, found in Atropa belladonna (Belladonna).